A 206-amino-acid polypeptide reads, in one-letter code: Ion-translocating oxidoreductase complex subunit G (206 aa).

The chain crosses the membrane as a helical span at residues 9–29 (GITLALFAAGSTGLTAVINQM). FMN phosphoryl threonine is present on Thr174.

This sequence belongs to the RnfG family. The complex is composed of six subunits: RsxA, RsxB, RsxC, RsxD, RsxE and RsxG. The cofactor is FMN.

The protein localises to the cell inner membrane. Functionally, part of a membrane-bound complex that couples electron transfer with translocation of ions across the membrane. Required to maintain the reduced state of SoxR. The protein is Ion-translocating oxidoreductase complex subunit G of Salmonella typhimurium (strain LT2 / SGSC1412 / ATCC 700720).